A 240-amino-acid chain; its full sequence is RNA transcription, translation and transport factor protein (240 aa).

Belongs to the RTRAF family. Homodimer. Component of a tRNA-splicing ligase complex.

Its subcellular location is the nucleus. It is found in the cytoplasm. It localises to the cytosol. The protein localises to the perinuclear region. The protein resides in the cytoskeleton. Its subcellular location is the microtubule organizing center. It is found in the centrosome. In terms of biological role, RNA-binding protein involved in modulation of mRNA transcription by Polymerase II. Component of the tRNA-splicing ligase complex. This chain is RNA transcription, translation and transport factor protein, found in Xenopus laevis (African clawed frog).